Reading from the N-terminus, the 294-residue chain is MNNIFKGLITALITPFKDNKLDLYALERILKHQIKHDVDAILIAGSTGEGSSLSFEEYKLLLQTSVEIVNKRIPIISGCSSNNTAYAIELAAESTKIKVDGFMASPPSYVKPTQHGIYKHFEALHEACNLPIILYSAPTRSGVDFSDETILRLSALTRILALKDCGVDLGRPLRIRAIVKKDFNILTGNDEVVLAFNAQGGVGWTAVASNIAPDMCKELLEKWYKNDTKGALEIHQKLLPLYKALFLESNPIPIKYAAHYLGLCENEIRPPLTEASDSAKKQIENIITALSIKI.

Thr-47 serves as a coordination point for pyruvate. The active-site Proton donor/acceptor is Tyr-135. The active-site Schiff-base intermediate with substrate is Lys-163. Thr-205 contributes to the pyruvate binding site.

The protein belongs to the DapA family. Homotetramer; dimer of dimers.

It localises to the cytoplasm. The catalysed reaction is L-aspartate 4-semialdehyde + pyruvate = (2S,4S)-4-hydroxy-2,3,4,5-tetrahydrodipicolinate + H2O + H(+). It participates in amino-acid biosynthesis; L-lysine biosynthesis via DAP pathway; (S)-tetrahydrodipicolinate from L-aspartate: step 3/4. Catalyzes the condensation of (S)-aspartate-beta-semialdehyde [(S)-ASA] and pyruvate to 4-hydroxy-tetrahydrodipicolinate (HTPA). This is 4-hydroxy-tetrahydrodipicolinate synthase from Rickettsia akari (strain Hartford).